A 436-amino-acid polypeptide reads, in one-letter code: Adenosylmethionine-8-amino-7-oxononanoate aminotransferase (436 aa).

Residue tryptophan 66 coordinates substrate. Pyridoxal 5'-phosphate is bound at residue 126–127; sequence GS. Tyrosine 159 is a substrate binding site. Pyridoxal 5'-phosphate is bound at residue aspartate 256. The substrate site is built by lysine 285 and glycine 318. Lysine 285 is modified (N6-(pyridoxal phosphate)lysine). 319 to 320 contributes to the pyridoxal 5'-phosphate binding site; the sequence is PT. Arginine 402 contributes to the substrate binding site.

Belongs to the class-III pyridoxal-phosphate-dependent aminotransferase family. BioA subfamily. In terms of assembly, homodimer. Requires pyridoxal 5'-phosphate as cofactor.

The protein localises to the cytoplasm. The enzyme catalyses (8S)-8-amino-7-oxononanoate + S-adenosyl-L-methionine = S-adenosyl-4-methylsulfanyl-2-oxobutanoate + (7R,8S)-7,8-diammoniononanoate. It participates in cofactor biosynthesis; biotin biosynthesis; 7,8-diaminononanoate from 8-amino-7-oxononanoate (SAM route): step 1/1. Catalyzes the transfer of the alpha-amino group from S-adenosyl-L-methionine (SAM) to 7-keto-8-aminopelargonic acid (KAPA) to form 7,8-diaminopelargonic acid (DAPA). It is the only aminotransferase known to utilize SAM as an amino donor. This Mycobacterium leprae (strain TN) protein is Adenosylmethionine-8-amino-7-oxononanoate aminotransferase.